The chain runs to 364 residues: Fructose-bisphosphate aldolase B (364 aa).

Position 2 is an N-acetylalanine (Ala2). Lys13 is subject to N6-succinyllysine. Ser36 carries the phosphoserine modification. The residue at position 39 (Thr39) is a Phosphothreonine. A beta-D-fructose 1,6-bisphosphate-binding site is contributed by Arg43. Position 89 is a phosphoserine (Ser89). Thr119 carries the phosphothreonine modification. Residue Lys121 is modified to N6-succinyllysine. Ser132 is modified (phosphoserine). Catalysis depends on Glu188, which acts as the Proton acceptor. Ser206 is modified (phosphoserine). The active-site Schiff-base intermediate with dihydroxyacetone-P is the Lys230. Ser272, Ser276, Ser299, and Ser301 each carry phosphoserine. Residue Ser272–Gly274 coordinates beta-D-fructose 1,6-bisphosphate. Position 304 (Arg304) interacts with beta-D-fructose 1,6-bisphosphate. Phosphoserine is present on Ser309. Lys317 bears the N6-succinyllysine mark.

The protein belongs to the class I fructose-bisphosphate aldolase family. Homotetramer. Interacts with BBS1, BBS2, BBS4 and BBS7. Forms a ternary complex with G6PD and TP53; this interaction is direct.

The protein resides in the cytoplasm. It localises to the cytosol. Its subcellular location is the cytoskeleton. It is found in the microtubule organizing center. The protein localises to the centrosome. The protein resides in the centriolar satellite. The catalysed reaction is beta-D-fructose 1,6-bisphosphate = D-glyceraldehyde 3-phosphate + dihydroxyacetone phosphate. The enzyme catalyses beta-D-fructose 1-phosphate = D-glyceraldehyde + dihydroxyacetone phosphate. The protein operates within carbohydrate degradation; glycolysis; D-glyceraldehyde 3-phosphate and glycerone phosphate from D-glucose: step 4/4. It participates in carbohydrate biosynthesis; gluconeogenesis. It functions in the pathway carbohydrate metabolism; fructose metabolism. Functionally, catalyzes the aldol cleavage of fructose 1,6-biphosphate to form two triosephosphates dihydroxyacetone phosphate and D-glyceraldehyde 3-phosphate in glycolysis as well as the reverse stereospecific aldol addition reaction in gluconeogenesis. In fructolysis, metabolizes fructose 1-phosphate derived from the phosphorylation of dietary fructose by fructokinase into dihydroxyacetone phosphate and D-glyceraldehyde. Acts as an adapter independently of its enzymatic activity, exerts a tumor suppressor role by stabilizing the ternary complex with G6PD and TP53 to inhibit G6PD activity and keep oxidative pentose phosphate metabolism in check. This chain is Fructose-bisphosphate aldolase B, found in Mus musculus (Mouse).